Consider the following 302-residue polypeptide: Heme A synthase (302 aa).

At 1–8 (MFRKQNLK) the chain is on the cytoplasmic side. Residues 9-29 (WLGVLATIIMTFVQLGGALVT) traverse the membrane as a helical segment. Residues 30 to 67 (KTGSEDGCGSSWPLCNGALLPENLPIQTIIELSHRAVS) are Extracellular-facing. The cysteines at positions 37 and 44 are disulfide-linked. Glu60 is an active-site residue. Residue His63 participates in heme o binding. Residues 68 to 88 (AISLIVVLWLVITAWKNIGYI) form a helical membrane-spanning segment. At 89–93 (KEIKP) the chain is on the cytoplasmic side. A helical transmembrane segment spans residues 94 to 114 (LSIISVGFLLVQALVGAAAVI). At 115–125 (WQQNPYVLALH) the chain is on the extracellular side. His125 provides a ligand contact to heme o. The helical transmembrane segment at 126–146 (FGISLISFSSVFLMTLIIFSI) threads the bilayer. The Cytoplasmic segment spans residues 147-161 (DKKYEADILFIHKPL). Residues 162–182 (RILTWLMAIIVYLTIYTGALV) form a helical membrane-spanning segment. Topologically, residues 183–215 (RHTKSSLAYGAWPIPFDDIVPHNAHDWVQFSHR) are extracellular. His214 is a binding site for heme b. A helical membrane pass occupies residues 216-236 (GMAFITFIWIMITFIHAIKNY). Residues 237–244 (SDNRTVRY) lie on the Cytoplasmic side of the membrane. A helical membrane pass occupies residues 245–265 (GYTASFILVILQVITGALSVI). The Extracellular segment spans residues 266 to 270 (TNVNL). A helical membrane pass occupies residues 271–291 (IIALFHALFITYLFGMIAYFI). His276 is a heme b binding site. At 292–302 (LLMLRTTRSLK) the chain is on the cytoplasmic side.

The protein belongs to the COX15/CtaA family. Type 1 subfamily. Interacts with CtaB. Requires heme b as cofactor.

It is found in the cell membrane. It carries out the reaction Fe(II)-heme o + 2 A + H2O = Fe(II)-heme a + 2 AH2. It participates in porphyrin-containing compound metabolism; heme A biosynthesis; heme A from heme O: step 1/1. Functionally, catalyzes the conversion of heme O to heme A by two successive hydroxylations of the methyl group at C8. The first hydroxylation forms heme I, the second hydroxylation results in an unstable dihydroxymethyl group, which spontaneously dehydrates, resulting in the formyl group of heme A. In Staphylococcus epidermidis (strain ATCC 12228 / FDA PCI 1200), this protein is Heme A synthase.